A 183-amino-acid polypeptide reads, in one-letter code: Large ribosomal subunit protein uL6 (183 aa).

This sequence belongs to the universal ribosomal protein uL6 family. Part of the 50S ribosomal subunit.

Its function is as follows. This protein binds to the 23S rRNA, and is important in its secondary structure. It is located near the subunit interface in the base of the L7/L12 stalk, and near the tRNA binding site of the peptidyltransferase center. This is Large ribosomal subunit protein uL6 from Porphyromonas gingivalis (strain ATCC 33277 / DSM 20709 / CIP 103683 / JCM 12257 / NCTC 11834 / 2561).